Here is a 362-residue protein sequence, read N- to C-terminus: Innexin inx1 (362 aa).

Residues 1-28 (MYKLLGSLKSYLKWQDIQTDNAVFRLHN) lie on the Cytoplasmic side of the membrane. A helical transmembrane segment spans residues 29-49 (SFTTVLLLTCSLIITATQYVG). Over 50 to 110 (QPISCIVNGV…DAKKYYTYYQ (61 aa)) the chain is Extracellular. Residues 111 to 131 (WVCFVLFFQAMACYTPKFLWN) form a helical membrane-spanning segment. Residues 132–177 (KFEGGLMRMIVMGLNITICTREEKEAKRDALLDYLIKHVKRHKLYA) lie on the Cytoplasmic side of the membrane. Residues 178–198 (IRYWACEFLCCINIIVQMYLM) form a helical membrane-spanning segment. The Extracellular portion of the chain corresponds to 199-267 (NRFFDGEFLS…LPLNIVNEKT (69 aa)). The chain crosses the membrane as a helical span at residues 268–288 (YVFIWFWFWILLVLLIGLIVF). At 289-362 (RGCIIFMPKF…VEPSKHDRAK (74 aa)) the chain is on the cytoplasmic side.

The protein belongs to the pannexin family. Heterooligomer of Inx2 and ogre. As to expression, in ovary, expressed in follicle cells. Expressed around the periphery of the embryo during cellular blastoderm formation. Repeating epidermal pattern emerges from stage 11, high levels of expression detected along the borders of each segment from stage 13. At stage 13, expressed in the dorsal branch of the tracheal system. During stage 15, detected in a few cells at each of the branch points of the dorsal trunk and at low levels in cardioblasts. In embryos, also expressed in the salivary gland and the hindgut (at protein level). At stage 17, expressed in the dorsal side of the CNS. Expressed in the imaginal wing disk. Expressed in larval CNS and in tissues outside of the CNS. In pupae, expressed in the CNS and in primary, secondary and tertiary pigment cells of the retina.

Its subcellular location is the cell membrane. The protein localises to the cell junction. It localises to the gap junction. The protein resides in the basolateral cell membrane. Functionally, structural component of the gap junctions. Essential for generation and/or maintenance of postembryonic neuroblasts and normal development of optic lobe. This Drosophila melanogaster (Fruit fly) protein is Innexin inx1 (ogre).